A 242-amino-acid polypeptide reads, in one-letter code: Pyridoxine 5'-phosphate synthase (242 aa).

Residue N7 coordinates 3-amino-2-oxopropyl phosphate. 9 to 10 (DH) lines the 1-deoxy-D-xylulose 5-phosphate pocket. R18 serves as a coordination point for 3-amino-2-oxopropyl phosphate. The active-site Proton acceptor is H44. 1-deoxy-D-xylulose 5-phosphate contacts are provided by R46 and H51. Residue E71 is the Proton acceptor of the active site. Residue T101 coordinates 1-deoxy-D-xylulose 5-phosphate. The active-site Proton donor is the H192. Residues G193 and 214–215 (GH) each bind 3-amino-2-oxopropyl phosphate.

Belongs to the PNP synthase family. Homooctamer; tetramer of dimers.

It is found in the cytoplasm. The enzyme catalyses 3-amino-2-oxopropyl phosphate + 1-deoxy-D-xylulose 5-phosphate = pyridoxine 5'-phosphate + phosphate + 2 H2O + H(+). Its pathway is cofactor biosynthesis; pyridoxine 5'-phosphate biosynthesis; pyridoxine 5'-phosphate from D-erythrose 4-phosphate: step 5/5. Catalyzes the complicated ring closure reaction between the two acyclic compounds 1-deoxy-D-xylulose-5-phosphate (DXP) and 3-amino-2-oxopropyl phosphate (1-amino-acetone-3-phosphate or AAP) to form pyridoxine 5'-phosphate (PNP) and inorganic phosphate. This chain is Pyridoxine 5'-phosphate synthase, found in Synechocystis sp. (strain ATCC 27184 / PCC 6803 / Kazusa).